A 278-amino-acid polypeptide reads, in one-letter code: Urease accessory protein UreD (278 aa).

Belongs to the UreD family. As to quaternary structure, ureD, UreF and UreG form a complex that acts as a GTP-hydrolysis-dependent molecular chaperone, activating the urease apoprotein by helping to assemble the nickel containing metallocenter of UreC. The UreE protein probably delivers the nickel.

It is found in the cytoplasm. Functionally, required for maturation of urease via the functional incorporation of the urease nickel metallocenter. This chain is Urease accessory protein UreD, found in Escherichia coli.